A 640-amino-acid polypeptide reads, in one-letter code: MRKVKIGELINSLVSEVEAIDASDRPQGDKTKKIKAAALKYKNALFNDKRKFRGKGLEKRISANTFNSYMSRARKRFDDRLHHNFEKNVIKLSEKYPLYSEELSSWLSMPAASIRQHMSRLQAKLKEIMPLAEDLSNIKIGTKNSEAKINKLANKYPEWQFAISDLNSEDWKDKRDYLYKLFQQGSSLLEDLNNLKVNHEVLYHLQLSSAERTSIQQRWANVLSEKKRNVVVIDYPRYMQAIYDIINKPIVSFDLTTRRGMAPLAFALAALSGRRMIEIMLQGEFSVAGKYTVTFLGQAKKRSEDKGISRKIYTLCDATLFVSLVNELRSCPAAADFDEVIKGYGENDTRSENGRINAILATAFNPWVKTFLGDDRRVYKDSRAIYARIAYEMFFRVDPRWKNVDEDVFFMEILGHDDENTQLHYKQFKLANFSRTWRPNVGEENARLAALQKLDSMMPDFARGDAGVRIHETVKQLVEQDPSIKITNSTLRPFNFSTRLIPRYLEFAADALGQFVGENGQWQLKDEAPAIVLPDEEILEPMDDVDLDDENHDDETLDDDEIEVDESEGEELEEAGDAEEAEVAEQEEKHPGKPNFKAPRDNGDGTYMVEFEFGGRHYAWSGAAGNRVEAMQSAWSAYFK.

Residues arginine 275, lysine 300, arginine 383, and histidine 416 each coordinate DNA. Tyrosine 425 (nucleophile) is an active-site residue. Residues 545–585 are compositionally biased toward acidic residues; sequence VDLDDENHDDETLDDDEIEVDESEGEELEEAGDAEEAEVAE. The disordered stretch occupies residues 545–605; sequence VDLDDENHDD…FKAPRDNGDG (61 aa).

It belongs to the Caudoviricetes Protelomerase family. Monomer. Homodimer; in presence of DNA.

In terms of biological role, converts the circular intermediates produced by the viral replication and carrying a joined telomere site to a linear DNA molecule with covalently closed hairpin ends. The viral circular DNA is cleaved at a palindromic site called telRL thereby generating a linear prophage plasmid with telomeres. Binds covalently to the 3'-phosphoryl of the cleaved strands. In Klebsiella oxytoca (Bacteriophage phiKO2), this protein is Protelomerase.